A 257-amino-acid chain; its full sequence is MEFPDLGAHCSEPSCQRLDFLPLKCDACSGIFCADHVAYAQHHCGSAYQKDIQVPVCPLCNVPVPVARGEPPDRAVGEHIDRDCRSDPAQQKRKIFTNKCERAGCRQREMMKLTCERCSRNFCIKHRHPLDHDCSGEGHPTSRAGLAAISRAQAVASTSTVPSPSQTMPSCTSPSRATTRSPSWTAPPVIALQNGLSEDEALQRALEMSLAETKPQVPSCQEEEDLALAQALSASEAEYQRQQAQSRSSKPSNCSLC.

2 AN1-type zinc fingers span residues 4 to 52 (PDLG…QKDI) and 94 to 142 (KIFT…HPTS). The Zn(2+) site is built by Cys-10, Cys-15, Cys-25, Cys-28, Cys-33, His-36, His-42, Cys-44, Cys-100, Cys-105, Cys-115, Cys-118, Cys-123, His-126, His-132, and Cys-134. The interval 141–151 (TSRAGLAAISR) is VCP/p97-interacting motif (VIM). The disordered stretch occupies residues 153 to 187 (QAVASTSTVPSPSQTMPSCTSPSRATTRSPSWTAP). Residues 155 to 171 (VASTSTVPSPSQTMPSC) show a composition bias toward polar residues. Phosphoserine occurs at positions 163 and 173. Residues 172 to 186 (TSPSRATTRSPSWTA) are compositionally biased toward low complexity. 2 UIM domains span residues 197–216 (SEDE…TKPQ) and 221–240 (QEEE…AEYQ). At Cys-254 the chain carries Cysteine methyl ester. A lipid anchor (S-geranylgeranyl cysteine) is attached at Cys-254. Residues 254 to 257 (CSLC) carry the CAAX motif motif. Positions 255-257 (SLC) are cleaved as a propeptide — removed in mature form.

As to quaternary structure, binds 'Lys-48'-linked polyubiquitin chains of ubiquitinated proteins. Associates with the proteasome complex; upon exposure to arsenite. Interacts (via VIM motif) with VCP; the interaction is direct. Interacts with BAG6. Interacts with IGF1R (nascent precursor form). Interacts with DERL1, FAF2, NPLOC4 and UFD1; probably through VCP. In terms of processing, phosphorylated by MAPK14. Phosphorylation has no effect on association with the proteasome complex.

The protein resides in the endoplasmic reticulum membrane. Its function is as follows. Plays a role in protein homeostasis by regulating both the translocation and the ubiquitin-mediated proteasomal degradation of nascent proteins at the endoplasmic reticulum. It is involved in the regulation of signal-mediated translocation of proteins into the endoplasmic reticulum. It also plays a role in the ubiquitin-mediated proteasomal degradation of proteins for which signal-mediated translocation to the endoplasmic reticulum has failed. May therefore function in the endoplasmic reticulum stress-induced pre-emptive quality control, a mechanism that selectively attenuates the translocation of newly synthesized proteins into the endoplasmic reticulum and reroutes them to the cytosol for proteasomal degradation. By controlling the steady-state expression of the IGF1R receptor, indirectly regulates the insulin-like growth factor receptor signaling pathway. The sequence is that of AN1-type zinc finger protein 2B from Homo sapiens (Human).